A 32-amino-acid polypeptide reads, in one-letter code: Cytochrome b6-f complex subunit 7 (32 aa).

Residues Phe-5–Ala-25 form a helical membrane-spanning segment.

This sequence belongs to the PetM family. The 4 large subunits of the cytochrome b6-f complex are cytochrome b6, subunit IV (17 kDa polypeptide, PetD), cytochrome f and the Rieske protein, while the 4 small subunits are PetG, PetL, PetM and PetN. The complex functions as a dimer.

It localises to the plastid. The protein localises to the chloroplast thylakoid membrane. Functionally, component of the cytochrome b6-f complex, which mediates electron transfer between photosystem II (PSII) and photosystem I (PSI), cyclic electron flow around PSI, and state transitions. In Guillardia theta (Cryptophyte), this protein is Cytochrome b6-f complex subunit 7.